The primary structure comprises 693 residues: Elongation factor G 1 (693 aa).

The region spanning 4-281 (NKLRNIGISA…AVTRFLPSPH (278 aa)) is the tr-type G domain. GTP contacts are provided by residues 13-20 (AHIDSGKT), 80-84 (DTPGH), and 134-137 (NKCD).

The protein belongs to the TRAFAC class translation factor GTPase superfamily. Classic translation factor GTPase family. EF-G/EF-2 subfamily.

It is found in the cytoplasm. Its function is as follows. Catalyzes the GTP-dependent ribosomal translocation step during translation elongation. During this step, the ribosome changes from the pre-translocational (PRE) to the post-translocational (POST) state as the newly formed A-site-bound peptidyl-tRNA and P-site-bound deacylated tRNA move to the P and E sites, respectively. Catalyzes the coordinated movement of the two tRNA molecules, the mRNA and conformational changes in the ribosome. The chain is Elongation factor G 1 from Borreliella afzelii (strain PKo) (Borrelia afzelii).